A 680-amino-acid chain; its full sequence is MQQSPHSPQSQSLSASAVDSAVPLSKLQQTYAVIPRERPQTPLLDSVDSPADLKTFSSAELITLADELRLFVLYSAGQSGGHFGANLGVIELTIALHYLLDTPQDQIVWDVGHQAYAHKVLTGRRDQLGTIRSKTGLTAFPERAESVYDTFGVGHSSTSISAGLGMSLALRYQGRAQTVACIIGDGAMTGGMAFEAMNDAVQQDADLMVILNDNDMSISCSIGGFSRHLAMLWESGYQVDISDAGEPILCQRPDMQAFDRRKRHKEQRDVPQLEDNLFKAIGFTYFGPFDGHNIPELLRVLSLAKQVKGPVLVHIYTTKGKGFAPAELDPVGYHAISSLPAEDNAPKTEKAAIKPSLKYSQVFGQFLCDKAAQDKKLLAITPAMEEGSGMIEFARQFPERFFDVAIAEQHAVTLAGGMATQGVKPIVAIYSTFLQRGYDQLIHDVALQNLDVMFAIDRAGLVGEDGATHAGVFDFAFLRCVPNMLIAAPKDENECYHLLNTCYEYQGCTAVRYPRGVGTGATIIQPAQIYNIGEAVIESVLGTDDAPKKLALLAFGTMVETAQKAAEMIAKSPLLASSCQLHVVNMRWVKPLDTNLLETLVEQGVTHIATLEEHMIMGGAGSAVNEYLLNESAAFKIHRPTICNIGIPDRFVAHGSQAEQLADCGLDVEGVFNQLQNLLS.

Residues 1–17 are compositionally biased toward low complexity; that stretch reads MQQSPHSPQSQSLSASA. The segment at 1–20 is disordered; sequence MQQSPHSPQSQSLSASAVDS. Thiamine diphosphate is bound by residues His-113 and 154 to 156; that span reads GHS. Asp-185 is a Mg(2+) binding site. Thiamine diphosphate contacts are provided by residues 186-187, Asn-214, Phe-323, and Glu-408; that span reads GA. Asn-214 serves as a coordination point for Mg(2+).

It belongs to the transketolase family. DXPS subfamily. As to quaternary structure, homodimer. The cofactor is Mg(2+). Requires thiamine diphosphate as cofactor.

It carries out the reaction D-glyceraldehyde 3-phosphate + pyruvate + H(+) = 1-deoxy-D-xylulose 5-phosphate + CO2. It participates in metabolic intermediate biosynthesis; 1-deoxy-D-xylulose 5-phosphate biosynthesis; 1-deoxy-D-xylulose 5-phosphate from D-glyceraldehyde 3-phosphate and pyruvate: step 1/1. Catalyzes the acyloin condensation reaction between C atoms 2 and 3 of pyruvate and glyceraldehyde 3-phosphate to yield 1-deoxy-D-xylulose-5-phosphate (DXP). In Psychrobacter cryohalolentis (strain ATCC BAA-1226 / DSM 17306 / VKM B-2378 / K5), this protein is 1-deoxy-D-xylulose-5-phosphate synthase.